Here is a 324-residue protein sequence, read N- to C-terminus: Zinc transporter ZIP1 (324 aa).

Residues 1–30 are Extracellular-facing; it reads MGPWGEPELLVWRPEAAASEAPVPMGLEVK. Residues 31–51 form a helical membrane-spanning segment; sequence LGALVLLLVLTLICSLVPVCV. Over 52-68 the chain is Cytoplasmic; it reads LRRPGANPEASASRQKA. The chain crosses the membrane as a helical span at residues 69–89; sequence LSLVSCFAGGVFLATCLLDLL. Residues 90–104 lie on the Extracellular side of the membrane; sequence PDYLGAIDEALAALH. A helical membrane pass occupies residues 105–125; the sequence is VTLQFPLQEFILAMGFFLVLV. Topologically, residues 126–179 are cytoplasmic; that stretch reads MEQITLAYKEQSGPPPREETRALLGTVNGGPQHWHDGLGVPQAGGASSAPSALR. Residues 180-200 form a helical membrane-spanning segment; that stretch reads ACVLVFSLALHSVFEGLAVGL. At 201 to 206 the chain is on the extracellular side; sequence QRDQAR. Residues 207–227 form a helical membrane-spanning segment; the sequence is AMELCLALLLHKGILAVSLSL. The Cytoplasmic segment spans residues 228-237; it reads RLLQSHLRAQ. A helical transmembrane segment spans residues 238-258; it reads VVAGCGILFSCMTPLGIGLGT. The Extracellular portion of the chain corresponds to 259–272; that stretch reads ALAESAGPLHQLAQ. The chain crosses the membrane as a helical span at residues 273–293; the sequence is SVLEGMAAGTFLYITFLEILP. Topologically, residues 294–303 are cytoplasmic; the sequence is QELATSEQRI. A helical transmembrane segment spans residues 304-324; it reads LKVILLLAGFALLTGLLFIQI.

The protein belongs to the ZIP transporter (TC 2.A.5) family.

Its subcellular location is the cell membrane. The protein localises to the endoplasmic reticulum membrane. It carries out the reaction Zn(2+)(in) = Zn(2+)(out). In terms of biological role, transporter for the divalent cation Zn(2+). Mediates the influx of Zn(2+) into cells from extracellular space. This chain is Zinc transporter ZIP1 (SLC39A1), found in Bos taurus (Bovine).